The sequence spans 180 residues: Crossover junction endodeoxyribonuclease RuvC (180 aa).

Residues Asp-7, Glu-66, and Asp-138 contribute to the active site. Mg(2+)-binding residues include Asp-7, Glu-66, and Asp-138.

Belongs to the RuvC family. In terms of assembly, homodimer which binds Holliday junction (HJ) DNA. The HJ becomes 2-fold symmetrical on binding to RuvC with unstacked arms; it has a different conformation from HJ DNA in complex with RuvA. In the full resolvosome a probable DNA-RuvA(4)-RuvB(12)-RuvC(2) complex forms which resolves the HJ. Mg(2+) is required as a cofactor.

It localises to the cytoplasm. It catalyses the reaction Endonucleolytic cleavage at a junction such as a reciprocal single-stranded crossover between two homologous DNA duplexes (Holliday junction).. In terms of biological role, the RuvA-RuvB-RuvC complex processes Holliday junction (HJ) DNA during genetic recombination and DNA repair. Endonuclease that resolves HJ intermediates. Cleaves cruciform DNA by making single-stranded nicks across the HJ at symmetrical positions within the homologous arms, yielding a 5'-phosphate and a 3'-hydroxyl group; requires a central core of homology in the junction. The consensus cleavage sequence is 5'-(A/T)TT(C/G)-3'. Cleavage occurs on the 3'-side of the TT dinucleotide at the point of strand exchange. HJ branch migration catalyzed by RuvA-RuvB allows RuvC to scan DNA until it finds its consensus sequence, where it cleaves and resolves the cruciform DNA. The polypeptide is Crossover junction endodeoxyribonuclease RuvC (Paraburkholderia phymatum (strain DSM 17167 / CIP 108236 / LMG 21445 / STM815) (Burkholderia phymatum)).